Reading from the N-terminus, the 339-residue chain is DNA-directed RNA polymerase subunit alpha (339 aa).

The segment at 1–233 (MVREEVAGST…DLFLPFLHAE (233 aa)) is alpha N-terminal domain (alpha-NTD). The tract at residues 264–339 (KKGIPLNCIF…IDLLKNKLSF (76 aa)) is alpha C-terminal domain (alpha-CTD).

It belongs to the RNA polymerase alpha chain family. In plastids the minimal PEP RNA polymerase catalytic core is composed of four subunits: alpha, beta, beta', and beta''. When a (nuclear-encoded) sigma factor is associated with the core the holoenzyme is formed, which can initiate transcription.

Its subcellular location is the plastid. The protein resides in the chloroplast. It catalyses the reaction RNA(n) + a ribonucleoside 5'-triphosphate = RNA(n+1) + diphosphate. Functionally, DNA-dependent RNA polymerase catalyzes the transcription of DNA into RNA using the four ribonucleoside triphosphates as substrates. The sequence is that of DNA-directed RNA polymerase subunit alpha from Eremopyrum distans.